Consider the following 409-residue polypeptide: UV excision repair protein RAD23 homolog B (409 aa).

The 79-residue stretch at 1-79 (MQVTLKTLQQ…VVVMVTKPKA (79 aa)) folds into the Ubiquitin-like domain. The disordered stretch occupies residues 80–175 (VSTPAPATTQ…STSGDSSRSN (96 aa)). Over residues 81–143 (STPAPATTQQ…SSEPAPASAA (63 aa)) the composition is skewed to low complexity. The segment covering 144–153 (KQEKPAEKPA) has biased composition (basic and acidic residues). Thr-155 is subject to Phosphothreonine. At Ser-160 the chain carries Phosphoserine. Residues 160-175 (SPTATDSTSGDSSRSN) show a composition bias toward polar residues. Thr-164 is modified (phosphothreonine). At Ser-174 the chain carries Phosphoserine. Thr-186 is subject to Phosphothreonine. The UBA 1 domain occupies 188–228 (QSYENMVTEIMSMGYEREQVIAALRASFNNPDRAVEYLLMG). The residue at position 199 (Ser-199) is a Phosphoserine. Phosphotyrosine is present on Tyr-202. The interval 236 to 276 (QAVVDPPQAASTGAPQSSAVAAAAATTTATTTTTSSGGHPL) is disordered. Positions 252–271 (SSAVAAAAATTTATTTTTSS) are enriched in low complexity. The region spanning 274–317 (HPLEFLRNQPQFQQMRQIIQQNPSLLPALLQQIGRENPQLLQQI) is the STI1 domain. Positions 364 to 404 (PQEKEAIERLKALGFPEGLVIQAYFACEKNENLAANFLLQQ) constitute a UBA 2 domain.

The protein belongs to the RAD23 family. As to quaternary structure, component of the XPC complex composed of XPC, RAD23B and CETN2. Interacts with NGLY1 and PSMC1. Interacts with ATXN3. Interacts with PSMD4 and PSMC5. Interacts with AMFR. Interacts with VCP; the interaction is indirect and mediated by NGLY1.

The protein resides in the nucleus. The protein localises to the cytoplasm. Its function is as follows. Multiubiquitin chain receptor involved in modulation of proteasomal degradation. Binds to polyubiquitin chains. Proposed to be capable to bind simultaneously to the 26S proteasome and to polyubiquitinated substrates and to deliver ubiquitinated proteins to the proteasome. May play a role in endoplasmic reticulum-associated degradation (ERAD) of misfolded glycoproteins by association with PNGase and delivering deglycosylated proteins to the proteasome. Functionally, involved in global genome nucleotide excision repair (GG-NER) by acting as component of the XPC complex. Cooperatively with CETN2 appears to stabilize XPC. May protect XPC from proteasomal degradation. The XPC complex is proposed to represent the first factor bound at the sites of DNA damage and together with other core recognition factors, XPA, RPA and the TFIIH complex, is part of the pre-incision (or initial recognition) complex. The XPC complex recognizes a wide spectrum of damaged DNA characterized by distortions of the DNA helix such as single-stranded loops, mismatched bubbles or single-stranded overhangs. The orientation of XPC complex binding appears to be crucial for inducing a productive NER. XPC complex is proposed to recognize and to interact with unpaired bases on the undamaged DNA strand which is followed by recruitment of the TFIIH complex and subsequent scanning for lesions in the opposite strand in a 5'-to-3' direction by the NER machinery. Cyclobutane pyrimidine dimers (CPDs) which are formed upon UV-induced DNA damage esacpe detection by the XPC complex due to a low degree of structural perurbation. Instead they are detected by the UV-DDB complex which in turn recruits and cooperates with the XPC complex in the respective DNA repair. In vitro, the XPC:RAD23B dimer is sufficient to initiate NER; it preferentially binds to cisplatin and UV-damaged double-stranded DNA and also binds to a variety of chemically and structurally diverse DNA adducts. XPC:RAD23B contacts DNA both 5' and 3' of a cisplatin lesion with a preference for the 5' side. XPC:RAD23B induces a bend in DNA upon binding. XPC:RAD23B stimulates the activity of DNA glycosylases TDG and SMUG1. The chain is UV excision repair protein RAD23 homolog B (RAD23B) from Homo sapiens (Human).